The chain runs to 271 residues: Urease accessory protein UreD (271 aa).

It belongs to the UreD family. As to quaternary structure, ureD, UreF and UreG form a complex that acts as a GTP-hydrolysis-dependent molecular chaperone, activating the urease apoprotein by helping to assemble the nickel containing metallocenter of UreC. The UreE protein probably delivers the nickel.

Its subcellular location is the cytoplasm. Its function is as follows. Required for maturation of urease via the functional incorporation of the urease nickel metallocenter. In Mycolicibacterium smegmatis (strain ATCC 700084 / mc(2)155) (Mycobacterium smegmatis), this protein is Urease accessory protein UreD.